A 347-amino-acid polypeptide reads, in one-letter code: 3,4-dihydroxy-2-butanone 4-phosphate synthase (347 aa).

Residues 1 to 200 form a DHBP synthase region; sequence MPLNRVREAI…ISDLIEYRMQ (200 aa). Residues 27 to 28, Asp-32, 139 to 143, and Glu-163 each bind D-ribulose 5-phosphate; these read RE and RTGHT. Mg(2+) is bound at residue Glu-28. Residue His-142 participates in Mg(2+) binding. Residues 201-347 are GTP cyclohydrolase II-like; that stretch reads NEMLILIKER…IVLQGGPIQL (147 aa).

This sequence in the N-terminal section; belongs to the DHBP synthase family. It in the C-terminal section; belongs to the GTP cyclohydrolase II family. Requires Mg(2+) as cofactor. It depends on Mn(2+) as a cofactor.

The enzyme catalyses D-ribulose 5-phosphate = (2S)-2-hydroxy-3-oxobutyl phosphate + formate + H(+). The protein operates within cofactor biosynthesis; riboflavin biosynthesis; 2-hydroxy-3-oxobutyl phosphate from D-ribulose 5-phosphate: step 1/1. Functionally, catalyzes the conversion of D-ribulose 5-phosphate to formate and 3,4-dihydroxy-2-butanone 4-phosphate. This Wolinella succinogenes (strain ATCC 29543 / DSM 1740 / CCUG 13145 / JCM 31913 / LMG 7466 / NCTC 11488 / FDC 602W) (Vibrio succinogenes) protein is 3,4-dihydroxy-2-butanone 4-phosphate synthase (ribB).